Reading from the N-terminus, the 313-residue chain is Porphobilinogen deaminase (313 aa).

Position 249 is an S-(dipyrrolylmethanemethyl)cysteine (cysteine 249).

The protein belongs to the HMBS family. In terms of assembly, monomer. It depends on dipyrromethane as a cofactor.

The catalysed reaction is 4 porphobilinogen + H2O = hydroxymethylbilane + 4 NH4(+). Its pathway is porphyrin-containing compound metabolism; protoporphyrin-IX biosynthesis; coproporphyrinogen-III from 5-aminolevulinate: step 2/4. Functionally, tetrapolymerization of the monopyrrole PBG into the hydroxymethylbilane pre-uroporphyrinogen in several discrete steps. This chain is Porphobilinogen deaminase, found in Paracoccus denitrificans (strain Pd 1222).